The following is a 512-amino-acid chain: NADH-quinone oxidoreductase subunit N (512 aa).

14 consecutive transmembrane segments (helical) span residues 32–52, 57–77, 97–117, 126–146, 151–171, 186–206, 231–251, 264–284, 296–316, 324–344, 348–368, 392–412, 431–451, and 473–493; these read VLPA…SVLF, FIIV…AVFY, VLSF…AAIV, IEFP…TLMT, FILV…LIGM, FLLG…LFGG, IGLV…PYHA, VTGY…LILY, WAWL…LLAL, MLAY…SAGI, VLFY…ILAY, AIAI…GGFW, ILLI…LRIG, and VGVT…WFLL.

Belongs to the complex I subunit 2 family. In terms of assembly, NDH-1 is composed of 14 different subunits. Subunits NuoA, H, J, K, L, M, N constitute the membrane sector of the complex.

It localises to the cell inner membrane. The catalysed reaction is a quinone + NADH + 5 H(+)(in) = a quinol + NAD(+) + 4 H(+)(out). NDH-1 shuttles electrons from NADH, via FMN and iron-sulfur (Fe-S) centers, to quinones in the respiratory chain. The immediate electron acceptor for the enzyme in this species is believed to be ubiquinone. Couples the redox reaction to proton translocation (for every two electrons transferred, four hydrogen ions are translocated across the cytoplasmic membrane), and thus conserves the redox energy in a proton gradient. The protein is NADH-quinone oxidoreductase subunit N of Leptospira interrogans serogroup Icterohaemorrhagiae serovar Lai (strain 56601).